The primary structure comprises 223 residues: Large ribosomal subunit protein uL4 (223 aa).

The disordered stretch occupies residues 47 to 72 (GTASTKTRGEVAGGGRKPWPQKHTGR).

The protein belongs to the universal ribosomal protein uL4 family. Part of the 50S ribosomal subunit.

One of the primary rRNA binding proteins, this protein initially binds near the 5'-end of the 23S rRNA. It is important during the early stages of 50S assembly. It makes multiple contacts with different domains of the 23S rRNA in the assembled 50S subunit and ribosome. Its function is as follows. Forms part of the polypeptide exit tunnel. This chain is Large ribosomal subunit protein uL4, found in Fervidobacterium nodosum (strain ATCC 35602 / DSM 5306 / Rt17-B1).